A 170-amino-acid polypeptide reads, in one-letter code: Adenine phosphoribosyltransferase (170 aa).

It belongs to the purine/pyrimidine phosphoribosyltransferase family. In terms of assembly, homodimer.

The protein localises to the cytoplasm. The enzyme catalyses AMP + diphosphate = 5-phospho-alpha-D-ribose 1-diphosphate + adenine. The protein operates within purine metabolism; AMP biosynthesis via salvage pathway; AMP from adenine: step 1/1. Functionally, catalyzes a salvage reaction resulting in the formation of AMP, that is energically less costly than de novo synthesis. In Streptococcus suis (strain 98HAH33), this protein is Adenine phosphoribosyltransferase.